The following is a 767-amino-acid chain: Probable NADP-dependent malic enzyme (767 aa).

The interval 1–430 is malic enzyme; sequence MDEMNKINYT…QLGSRLNPTA (430 aa). The active-site Proton donor is tyrosine 42. Lysine 97 functions as the Proton acceptor in the catalytic mechanism. A divalent metal cation contacts are provided by glutamate 139, aspartate 140, and aspartate 165. Residues 198 to 201, asparagine 290, and asparagine 322 each bind NADP(+); that span reads AGAA. Residues 431 to 767 form a phosphate acetyltransferase region; the sequence is NYMNFLAEKI…FACVEAIKEV (337 aa).

In the N-terminal section; belongs to the malic enzymes family. This sequence in the C-terminal section; belongs to the phosphate acetyltransferase and butyryltransferase family. Mg(2+) serves as cofactor. Requires Mn(2+) as cofactor.

The enzyme catalyses (S)-malate + NADP(+) = pyruvate + CO2 + NADPH. It catalyses the reaction oxaloacetate + H(+) = pyruvate + CO2. The chain is Probable NADP-dependent malic enzyme from Rickettsia prowazekii (strain Madrid E).